The primary structure comprises 507 residues: GMP synthase [glutamine-hydrolyzing] (507 aa).

The 190-residue stretch at 4 to 193 folds into the Glutamine amidotransferase type-1 domain; it reads KIIILDFGSQ…VVDVCGCKQD (190 aa). The active-site Nucleophile is Cys79. Active-site residues include His167 and Glu169. The GMPS ATP-PPase domain occupies 194–382; sequence WSPASFIEST…LGMPEHLITR (189 aa). Residue 221-227 coordinates ATP; that stretch reads SGGVDSS.

Homodimer.

It catalyses the reaction XMP + L-glutamine + ATP + H2O = GMP + L-glutamate + AMP + diphosphate + 2 H(+). It functions in the pathway purine metabolism; GMP biosynthesis; GMP from XMP (L-Gln route): step 1/1. Catalyzes the synthesis of GMP from XMP. This is GMP synthase [glutamine-hydrolyzing] from Bacteroides fragilis (strain ATCC 25285 / DSM 2151 / CCUG 4856 / JCM 11019 / LMG 10263 / NCTC 9343 / Onslow / VPI 2553 / EN-2).